Reading from the N-terminus, the 419-residue chain is Hyaluronan synthase (419 aa).

5 helical membrane passes run 8–28 (LIVL…MYLF), 33–53 (VGIY…LSFL), 318–338 (IVAL…VAIG), 345–365 (AIQL…IVAL), and 376–396 (PASF…LQPL).

The protein belongs to the NodC/HAS family. It depends on Mg(2+) as a cofactor.

It is found in the cell membrane. The enzyme catalyses [hyaluronan](n) + UDP-N-acetyl-alpha-D-glucosamine = N-acetyl-beta-D-glucosaminyl-(1-&gt;4)-[hyaluronan](n) + UDP + H(+). It catalyses the reaction N-acetyl-beta-D-glucosaminyl-(1-&gt;4)-[hyaluronan](n) + UDP-alpha-D-glucuronate = [hyaluronan](n+1) + UDP + H(+). It functions in the pathway glycan biosynthesis; hyaluronan biosynthesis. In terms of biological role, glycosaminoglycan synthesis. The hyaluronic acid capsule is involved in the pathogenicity of group A Streptococci; it may be the major virulence determinant. The protein is Hyaluronan synthase (hasA) of Streptococcus pyogenes serotype M3 (strain ATCC BAA-595 / MGAS315).